A 94-amino-acid chain; its full sequence is Small ribosomal subunit protein uS19 (94 aa).

It belongs to the universal ribosomal protein uS19 family.

In terms of biological role, protein S19 forms a complex with S13 that binds strongly to the 16S ribosomal RNA. The polypeptide is Small ribosomal subunit protein uS19 (Wolbachia sp. subsp. Brugia malayi (strain TRS)).